Reading from the N-terminus, the 333-residue chain is Glycerol-3-phosphate dehydrogenase [NAD(P)+] (333 aa).

Residues serine 10, tryptophan 11, and lysine 105 each contribute to the NADPH site. Sn-glycerol 3-phosphate-binding residues include lysine 105, glycine 136, and threonine 138. Alanine 140 serves as a coordination point for NADPH. Lysine 191, aspartate 244, serine 254, arginine 255, and asparagine 256 together coordinate sn-glycerol 3-phosphate. The active-site Proton acceptor is the lysine 191. Position 255 (arginine 255) interacts with NADPH. NADPH contacts are provided by valine 279 and glutamate 281.

The protein belongs to the NAD-dependent glycerol-3-phosphate dehydrogenase family.

It is found in the cytoplasm. It catalyses the reaction sn-glycerol 3-phosphate + NAD(+) = dihydroxyacetone phosphate + NADH + H(+). The catalysed reaction is sn-glycerol 3-phosphate + NADP(+) = dihydroxyacetone phosphate + NADPH + H(+). The protein operates within membrane lipid metabolism; glycerophospholipid metabolism. Catalyzes the reduction of the glycolytic intermediate dihydroxyacetone phosphate (DHAP) to sn-glycerol 3-phosphate (G3P), the key precursor for phospholipid synthesis. This chain is Glycerol-3-phosphate dehydrogenase [NAD(P)+], found in Trichlorobacter lovleyi (strain ATCC BAA-1151 / DSM 17278 / SZ) (Geobacter lovleyi).